Here is a 434-residue protein sequence, read N- to C-terminus: MVVKFTKSEALHKEALEHIVGGVNSPSRSFKAVGGGAPVAMERGKGAYFWDVDGNKYIDYLAAYGPIITGHAHPHITKAITTAAENGVLYGTPTALEVKFAKMLKEAMPALDKVRFVNSGTEAVMTTIRVARAYTGRTKIMKFAGCYHGHSDLVLVAAGSGPSTLGTPDSAGVPQSIAQEVITVPFNNVETLKEALDKWGHEVAAILVEPIVGNFGIVEPKPGFLEKVNELVHEAGALVIYDEVITAFRFMYGGAQDLLGVTPDLTALGKVIGGGLPIGAYGGKKEIMEQVAPLGPAYQAGTMAGNPASMASGIACLEVLQQEGLYEKLDELGAMLEKGILEQAAKHNIDITLNRLKGALTVYFTTNTIEDYDAAQDTDGEMFGKFFKLMLQEGVNLAPSKYEAWFLTTEHTKEDIEYTIEAVGRAFAALADSK.

An N6-(pyridoxal phosphate)lysine modification is found at Lys-270.

This sequence belongs to the class-III pyridoxal-phosphate-dependent aminotransferase family. HemL subfamily. In terms of assembly, homodimer. Pyridoxal 5'-phosphate serves as cofactor.

The protein localises to the cytoplasm. The enzyme catalyses (S)-4-amino-5-oxopentanoate = 5-aminolevulinate. It functions in the pathway porphyrin-containing compound metabolism; protoporphyrin-IX biosynthesis; 5-aminolevulinate from L-glutamyl-tRNA(Glu): step 2/2. This chain is Glutamate-1-semialdehyde 2,1-aminomutase 2, found in Bacillus cereus (strain G9842).